A 122-amino-acid polypeptide reads, in one-letter code: Putative 2'-deoxynucleoside 5'-phosphate N-hydrolase 1 (122 aa).

Residues 4–10 (FLSGSIR), Tyr19, His37, Glu83, and 105–107 (SAM) each bind substrate.

This sequence belongs to the 2'-deoxynucleoside 5'-phosphate N-hydrolase 1 family. In terms of assembly, monomer and homodimer.

The enzyme catalyses a pyrimidine 2'-deoxyribonucleoside 5'-phosphate + H2O = a pyrimidine nucleobase + 2-deoxy-D-ribose 5-phosphate. It carries out the reaction a purine 2'-deoxyribonucleoside 5'-phosphate + H2O = a purine nucleobase + 2-deoxy-D-ribose 5-phosphate. Its function is as follows. Catalyzes the cleavage of the N-glycosidic bond of deoxyribonucleoside 5'-monophosphates to yield deoxyribose 5-phosphate and a purine or pyrimidine base. In Methanococcoides burtonii (strain DSM 6242 / NBRC 107633 / OCM 468 / ACE-M), this protein is Putative 2'-deoxynucleoside 5'-phosphate N-hydrolase 1.